A 103-amino-acid polypeptide reads, in one-letter code: Large ribosomal subunit protein eL14 (103 aa).

The protein belongs to the eukaryotic ribosomal protein eL14 family.

In Pyrobaculum neutrophilum (strain DSM 2338 / JCM 9278 / NBRC 100436 / V24Sta) (Thermoproteus neutrophilus), this protein is Large ribosomal subunit protein eL14.